A 1012-amino-acid polypeptide reads, in one-letter code: Vacuolar membrane protease (1012 aa).

Over 1–60 (MRRSTDPRNLLVRRGPLLVDGESAISELDPGFFPTGDAPKMSSTTRRRFNLIAFTPGPVT) the chain is Cytoplasmic. Residues 61 to 81 (VISSLVYLALLIPLLLVHTIV) form a helical membrane-spanning segment. The Vacuolar segment spans residues 82-432 (PSAPKSNPKG…SFAVFRLHTL (351 aa)). Asn159 is a glycosylation site (N-linked (GlcNAc...) asparagine). Residues His215 and Asp227 each contribute to the Zn(2+) site. The active-site Proton acceptor is Glu261. Zn(2+) contacts are provided by Glu262, Glu287, and His360. A helical membrane pass occupies residues 433–453 (FAISVTLLVVCPIVLFVIGII). Topologically, residues 454–487 (LSKMDKMYLFSIHETIPETKEKVSVRGLRGLFRY) are cytoplasmic. Residues 488 to 508 (PIILVVSSGILIGLSYLLAKV) traverse the membrane as a helical segment. The Vacuolar segment spans residues 509–518 (NPFIVHSSSY). A helical membrane pass occupies residues 519 to 539 (AVWSMMLSSWIFMTWFLSCIA). The Cytoplasmic segment spans residues 540 to 550 (DFFRPSALHRA). A helical transmembrane segment spans residues 551-571 (YTFTWQLLVMWVLLVISTVYV). Residues 572 to 575 (NQHD) are Vacuolar-facing. A helical membrane pass occupies residues 576–596 (IAAGYFIVFYFAGTFLATLIS). Residues 597-710 (YLELFALPNK…WSASLPTWTW (114 aa)) are Cytoplasmic-facing. The span at 614–629 (SQYPSRLGSNRSSRIL) shows a compositional bias: polar residues. Positions 614 to 660 (SQYPSRLGSNRSSRILSPSADELPTGGDNNGEIYDGEEEPTESSSLL) are disordered. Residues 711-731 (VLQFLFVGPVVIMFIGQLGLF) form a helical membrane-spanning segment. At 732 to 743 (LTSAMNQVGADG) the chain is on the vacuolar side. A helical membrane pass occupies residues 744-764 (VGLLVVYIAIAVFSVLLLIPL). Over 765–777 (SPFIHRFTYHVPT) the chain is Cytoplasmic. The helical transmembrane segment at 778–798 (FLLLVFIATLIYNLAAFPFSA) threads the bilayer. The Vacuolar segment spans residues 799 to 1012 (ENRLKIFFVQ…DGLVEVSRGF (214 aa)). 2 N-linked (GlcNAc...) asparagine glycosylation sites follow: Asn842 and Asn878.

The protein belongs to the peptidase M28 family. The cofactor is Zn(2+).

The protein resides in the vacuole membrane. In terms of biological role, may be involved in vacuolar sorting and osmoregulation. In Coccidioides posadasii (strain C735) (Valley fever fungus), this protein is Vacuolar membrane protease.